The chain runs to 235 residues: Histidine/lysine/arginine/ornithine transport system permease protein HisM (235 aa).

Over 1–26 (MIEIIQEYWKSLLWTDGYRFTGVAIT) the chain is Periplasmic. Residues 23–221 (VAITLWLLIS…LISYVLISLF (199 aa)) form the ABC transmembrane type-1 domain. Residues 27-47 (LWLLISSVVMGGLLAVILAVG) traverse the membrane as a helical segment. Topologically, residues 48–58 (RVSSNKFIRFP) are cytoplasmic. A helical transmembrane segment spans residues 59–79 (IWLFTYIFRGTPLYVQLLVFY). Residues 80–104 (SGMYTLEIVKGTDLLNAFFRSGLNC) are Periplasmic-facing. A helical membrane pass occupies residues 105–125 (TVLALTLNTCAYTTEIFAGAI). Over 126–157 (RSVPHGEIEAARAYGFSSFKMYRCIILPSALR) the chain is Cytoplasmic. A helical transmembrane segment spans residues 158 to 178 (IALPAYSNEVILMLHSTALAF). The Periplasmic segment spans residues 179–199 (TATVPDLLKIARDINSATYQP). The chain crosses the membrane as a helical span at residues 200–220 (FTAFGIAAVLYLLISYVLISL). Topologically, residues 221 to 235 (FRRAERRWLQHVSSK) are cytoplasmic.

It belongs to the binding-protein-dependent transport system permease family. HisMQ subfamily. As to quaternary structure, the HisPMQJ complex is composed of two ATP-binding proteins (HisP), two transmembrane proteins (HisM and HisQ) and a solute-binding protein (HisJ). The HisPMQ-ArgT complex is composed of two ATP-binding proteins (HisP), two transmembrane proteins (HisM and HisQ) and a solute-binding protein (ArgT).

Its subcellular location is the cell inner membrane. Its function is as follows. Part of the ABC transporter complex HisPMQJ involved in histidine transport. Is also part of the ABC transporter complex HisPMQ-ArgT involved in lysine/arginine/ornithine transport. Probably responsible for the translocation of the substrate across the membrane. This is Histidine/lysine/arginine/ornithine transport system permease protein HisM (hisM) from Salmonella typhi.